The primary structure comprises 269 residues: Putative 12-oxophytodienoate reductase-like protein 2A (269 aa).

FMN contacts are provided by residues 28-30 (PLT) and Gln103. Substrate is bound at residue 175 to 178 (HGAH). The active-site Proton donor is the Tyr180. Arg227 contacts FMN.

This sequence belongs to the NADH:flavin oxidoreductase/NADH oxidase family. FMN serves as cofactor.

In terms of biological role, putative oxophytodienoate reductase that may be involved in the biosynthesis or metabolism of oxylipin signaling molecules. In Arabidopsis thaliana (Mouse-ear cress), this protein is Putative 12-oxophytodienoate reductase-like protein 2A.